The sequence spans 348 residues: Isopentenyl-diphosphate delta-isomerase (348 aa).

Residue arginine 14–lysine 15 coordinates substrate. Residues serine 72, serine 73–threonine 75, serine 103, and asparagine 131 contribute to the FMN site. Serine 103–arginine 105 serves as a coordination point for substrate. Residue glutamine 166 coordinates substrate. Position 167 (glutamate 167) interacts with Mg(2+). Residues lysine 198, threonine 228, glycine 278–arginine 280, and alanine 299–arginine 300 contribute to the FMN site.

The protein belongs to the IPP isomerase type 2 family. In terms of assembly, homooctamer. Dimer of tetramers. It depends on FMN as a cofactor. Requires NADPH as cofactor. Mg(2+) is required as a cofactor.

The protein localises to the cytoplasm. It carries out the reaction isopentenyl diphosphate = dimethylallyl diphosphate. Involved in the biosynthesis of isoprenoids. Catalyzes the 1,3-allylic rearrangement of the homoallylic substrate isopentenyl (IPP) to its allylic isomer, dimethylallyl diphosphate (DMAPP). The polypeptide is Isopentenyl-diphosphate delta-isomerase (Synechococcus sp. (strain ATCC 27144 / PCC 6301 / SAUG 1402/1) (Anacystis nidulans)).